The following is a 227-amino-acid chain: PKHD-type hydroxylase Reut_B4660 (227 aa).

A Fe2OG dioxygenase domain is found at 78–178; that stretch reads KVFPPLFNRY…RVSSFFWIQS (101 aa). Fe cation is bound by residues His96, Asp98, and His159. Position 169 (Arg169) interacts with 2-oxoglutarate.

The cofactor is Fe(2+). It depends on L-ascorbate as a cofactor.

This chain is PKHD-type hydroxylase Reut_B4660, found in Cupriavidus pinatubonensis (strain JMP 134 / LMG 1197) (Cupriavidus necator (strain JMP 134)).